Reading from the N-terminus, the 656-residue chain is Acyl-CoA-binding domain-containing protein 6 (656 aa).

The ACB domain occupies 8–102 (YPDRFYAAAA…LEEEDPGWYS (95 aa)). Residues 44 to 48 (YGLYQ) and Lys70 each bind an acyl-CoA. Residues 129-148 (ASTNGTSVPEPKTISENGSS) form a disordered region. 6 Kelch repeats span residues 194–241 (KMYI…AQVS), 254–304 (KFFS…LVGT), 305–354 (TLVL…CHAD), 356–405 (YLLI…TVGE), 406–454 (NWYI…LVHS), and 461–507 (YLIS…EPEV). Residues 527–636 (LKKDDANELL…EQAALEAKQR (110 aa)) adopt a coiled-coil conformation. The segment at 627-656 (EQAALEAKQRQSSSGMWGWLVGTPPDKSES) is disordered.

Belongs to the ACBP family. As to expression, highly expressed in leaves. Expressed in roots and seeds.

The protein resides in the peroxisome. In terms of biological role, binds medium- and long-chain acyl-CoA esters with high affinity. Can interact in vitro with linoleoyl-CoA and linolenoyl-CoA. Binds phosphatidic acid (PA) and phosphatidylcholine (PC) in vitro. May play a role in the biosynthesis of phospholipids. May be involved in lipid degradation via peroxisomal beta-oxydation. The polypeptide is Acyl-CoA-binding domain-containing protein 6 (Oryza sativa subsp. japonica (Rice)).